The following is a 657-amino-acid chain: Tyrosine-protein phosphatase vhp-1 (657 aa).

Residues 21–151 (APDTTLVVDC…FAQQYPQLCE (131 aa)) enclose the Rhodanese domain. Positions 175–318 (GITLITPNIY…LLEYENVLIK (144 aa)) constitute a Tyrosine-protein phosphatase domain. The Phosphocysteine intermediate role is filled by Cys262. 3 disordered regions span residues 353 to 426 (SNCV…MDLG), 539 to 563 (VPAGSSSISTPSGSQSTPASASSSA), and 581 to 657 (PAST…PCHQ). Residues 366–405 (SPSSPSVSEGSAASEPETSSSAASSSSTASAPPSMPSTSE) are compositionally biased toward low complexity. Residues 406 to 419 (QGTSSGTVNVNGKR) are compositionally biased toward polar residues. 2 stretches are compositionally biased toward low complexity: residues 542-563 (GSSSISTPSGSQSTPASASSSA) and 581-597 (PASTSTPASSTPGTSRA).

It belongs to the protein-tyrosine phosphatase family. Non-receptor class dual specificity subfamily. May interact with pmk-3. In terms of tissue distribution, expressed in the pharynx, intestine, neurons and vulval hypodermal cells.

The catalysed reaction is O-phospho-L-tyrosyl-[protein] + H2O = L-tyrosyl-[protein] + phosphate. In terms of biological role, acts preferentially on the c-Jun N-terminal kinase (JNK) and p38 MAPKs. Plays an important role in the heavy metal stress response and in axon regeneration by negatively regulating the kgb-1 (JNK-like) and the pmk-1 (p38-type) MAPK signaling pathways. This chain is Tyrosine-protein phosphatase vhp-1 (vhp-1), found in Caenorhabditis elegans.